Here is a 408-residue protein sequence, read N- to C-terminus: Acetate kinase (408 aa).

A Mg(2+)-binding site is contributed by asparagine 7. Lysine 14 contacts ATP. A substrate-binding site is contributed by arginine 98. The active-site Proton donor/acceptor is the aspartate 155. ATP is bound by residues 214–218, 289–291, and 337–341; these read HLGNG, DLR, and GVGEN. Glutamate 390 contacts Mg(2+).

It belongs to the acetokinase family. In terms of assembly, homodimer. The cofactor is Mg(2+). It depends on Mn(2+) as a cofactor.

It is found in the cytoplasm. The enzyme catalyses acetate + ATP = acetyl phosphate + ADP. It participates in metabolic intermediate biosynthesis; acetyl-CoA biosynthesis; acetyl-CoA from acetate: step 1/2. Catalyzes the formation of acetyl phosphate from acetate and ATP. Can also catalyze the reverse reaction. This is Acetate kinase from Cyanothece sp. (strain PCC 7425 / ATCC 29141).